A 124-amino-acid chain; its full sequence is Small ribosomal subunit protein uS12 (124 aa).

The residue at position 89 (Asp-89) is a 3-methylthioaspartic acid.

It belongs to the universal ribosomal protein uS12 family. In terms of assembly, part of the 30S ribosomal subunit. Contacts proteins S8 and S17. May interact with IF1 in the 30S initiation complex.

Its function is as follows. With S4 and S5 plays an important role in translational accuracy. Functionally, interacts with and stabilizes bases of the 16S rRNA that are involved in tRNA selection in the A site and with the mRNA backbone. Located at the interface of the 30S and 50S subunits, it traverses the body of the 30S subunit contacting proteins on the other side and probably holding the rRNA structure together. The combined cluster of proteins S8, S12 and S17 appears to hold together the shoulder and platform of the 30S subunit. This Vibrio cholerae serotype O1 (strain ATCC 39315 / El Tor Inaba N16961) protein is Small ribosomal subunit protein uS12.